Consider the following 893-residue polypeptide: TBC domain-containing protein kinase-like protein (893 aa).

The region spanning 1–273 (MFPLKDAEMG…PDQLMKDKVF (273 aa)) is the Protein kinase domain. The Rab-GAP TBC domain maps to 466 to 651 (DIPPLMRGLT…HLWDTLLLGN (186 aa)). The interval 710 to 749 (YRQHAQPPKPSSDSSGGRSSAPYFSAECPDPPKTDLSRES) is disordered. Low complexity predominate over residues 720-729 (SSDSSGGRSS). Residues 790–889 (SKPKLLVVDI…IKPTGLLTIP (100 aa)) form the Rhodanese domain.

Belongs to the protein kinase superfamily. In terms of assembly, component of the FERRY complex composed of five subunits, TBCK, PPP1R21, FERRY3, CRYZL1 and GATD1 with a ratio of 1:2:1:2:4, respectively.

It is found in the cytoplasm. The protein localises to the cytoskeleton. The protein resides in the spindle. It localises to the midbody. Its subcellular location is the early endosome. In terms of biological role, component of the FERRY complex (Five-subunit Endosomal Rab5 and RNA/ribosome intermediary). The FERRY complex directly interacts with mRNAs and RAB5A, and functions as a RAB5A effector involved in the localization and the distribution of specific mRNAs most likely by mediating their endosomal transport. The complex recruits mRNAs and ribosomes to early endosomes through direct mRNA-interaction. Also involved in the modulation of mTOR signaling and expression of mTOR complex components. Involved in the control of actin-cytoskeleton organization. The chain is TBC domain-containing protein kinase-like protein from Homo sapiens (Human).